Consider the following 315-residue polypeptide: Protein ADP-ribosyltransferase (315 aa).

In terms of domain architecture, Deacetylase sirtuin-type spans 13-299 (LMDEKTKQAE…TTALRNDSTT (287 aa)). NAD(+) contacts are provided by residues Ala-40, 123–126 (TNAD), and Gln-143. Residues Cys-151, Cys-155, Cys-186, and Cys-189 each coordinate Zn(2+). Residues 238–240 (YTT), Asn-264, Tyr-268, and Ile-285 contribute to the NAD(+) site.

Belongs to the sirtuin family. Class M subfamily. Zn(2+) is required as a cofactor.

It carries out the reaction L-aspartyl-[protein] + NAD(+) = 4-O-(ADP-D-ribosyl)-L-aspartyl-[protein] + nicotinamide. Is inhibited by Tenovin-6 in vitro, but not by nicotinamide. Functionally, catalyzes specifically the mono-ADP-ribosylation of GcvH-L (SAV0324). This activity is dependent on prior lipoylation of the target protein. May be involved in the modulation of the response to host-derived oxidative stress. In contrast to other sirtuin classes, lacks protein deacylase activity, being unable to catalyze delipoylation, debiotinylation, deacetylation and desuccinylation of proteins. The polypeptide is Protein ADP-ribosyltransferase (Staphylococcus aureus (strain Mu50 / ATCC 700699)).